Reading from the N-terminus, the 107-residue chain is Phosphoribosyl-ATP pyrophosphatase (107 aa).

It belongs to the PRA-PH family.

It is found in the cytoplasm. It catalyses the reaction 1-(5-phospho-beta-D-ribosyl)-ATP + H2O = 1-(5-phospho-beta-D-ribosyl)-5'-AMP + diphosphate + H(+). It functions in the pathway amino-acid biosynthesis; L-histidine biosynthesis; L-histidine from 5-phospho-alpha-D-ribose 1-diphosphate: step 2/9. The polypeptide is Phosphoribosyl-ATP pyrophosphatase (Bacillus thuringiensis (strain Al Hakam)).